The chain runs to 123 residues: 1,4-dihydroxy-2-naphthoyl-CoA hydrolase (123 aa).

Glutamate 46 acts as the Nucleophile or proton acceptor in catalysis.

This sequence belongs to the thioesterase PaaI family.

The enzyme catalyses 1,4-dihydroxy-2-naphthoyl-CoA + H2O = 1,4-dihydroxy-2-naphthoate + CoA + H(+). Its pathway is quinol/quinone metabolism; menaquinone biosynthesis. Its function is as follows. Catalyzes the hydrolysis of 1,4-dihydroxy-2-naphthoyl-CoA (DHNA-CoA) to 1,4-dihydroxy-2-naphthoate (DHNA) and free coenzyme A. Production of DHNA is required for protection against bacteriolysis in the cytosol of macrophages and tissue-specific virulence in vivo, suggesting that MenI is required to protect the bacteria from killing in the macrophage cytosol. The chain is 1,4-dihydroxy-2-naphthoyl-CoA hydrolase from Listeria monocytogenes serotype 1/2a (strain 10403S).